The following is a 137-amino-acid chain: Large ribosomal subunit protein uL13 (137 aa).

Residue Arg55 is modified to Citrulline. Position 73 is a phosphoserine (Ser73). Arg136 is modified (citrulline).

Belongs to the universal ribosomal protein uL13 family. As to quaternary structure, component of the 60S ribosome. Component of the GAIT complex. Interacts with EIF4G1. Phosphorylation at Ser-73 upon interferon-gamma treatment in macrophages involves a DAPK1-DAPK3 kinase cascade and is causing release from the ribosome, association with the GAIT complex and subsequent involvement in transcript-selective translation inhibition. Post-translationally, citrullinated by PADI4.

It localises to the cytoplasm. In terms of biological role, associated with ribosomes but is not required for canonical ribosome function and has extra-ribosomal functions. Component of the GAIT (gamma interferon-activated inhibitor of translation) complex which mediates interferon-gamma-induced transcript-selective translation inhibition in inflammation processes. Upon interferon-gamma activation and subsequent phosphorylation dissociates from the ribosome and assembles into the GAIT complex which binds to stem loop-containing GAIT elements in the 3'-UTR of diverse inflammatory mRNAs (such as ceruplasmin) and suppresses their translation. In the GAIT complex interacts with m7G cap-bound eIF4G at or near the eIF3-binding site and blocks the recruitment of the 43S ribosomal complex. Involved in methylation of rRNA. This Sus scrofa (Pig) protein is Large ribosomal subunit protein uL13 (RPL13A).